The chain runs to 250 residues: Osmotin-like protein OSML15 (250 aa).

The signal sequence occupies residues 1–21 (MSHLTTCLVFFLLAFVTYTNA). Disulfide bonds link Cys31–Cys226, Cys73–Cys83, Cys88–Cys94, Cys142–Cys214, Cys147–Cys197, Cys155–Cys165, Cys169–Cys178, and Cys179–Cys184.

Belongs to the thaumatin family.

This Solanum commersonii (Commerson's wild potato) protein is Osmotin-like protein OSML15.